A 266-amino-acid chain; its full sequence is Gasdermin bGSDM (266 aa).

4 beta stranded membrane-spanning segments follow: residues 65–81 (FSGQ…GADL), 93–113 (EDKL…FAYE), 162–181 (QFTV…EAAV), and 187–203 (AHAS…SLQT). The segment at 248–266 (GEEDFSVQPLQAPSGLLKL) is C-terminal region.

Belongs to the bacterial gasdermin family. Monomer. As to quaternary structure, forms large, homooligomeric ring-shaped pores when inserted in membranes.

Its subcellular location is the cytoplasm. The protein localises to the cell membrane. The full-length protein before cleavage is inactive: intramolecular interactions between the N-terminal domain and the C-terminal region mediate autoinhibition. The pyroptosis-like-inducing activity is carried by the released N-terminal domain (Gasdermin bGSDM, N-terminus). Precursor of a pore-forming protein involved in defense against bacteriophages. Cleavage of this precursor by its dedicated protease releases the active moiety (gasdermin bGSDM, N-terminus) which inserts into membranes, forming pores and triggering cell death. Expression of bGSDM and the neighboring protease gene (Ga0307981_100051430) is highly toxic in E.coli. Its function is as follows. Pore-forming protein that causes membrane permeabilization via a pyroptosis-like activity. This is the active form which makes ring-like pores with an interior pore diameter of 130-190 Angstroms, when integrated in liposomes. The sequence is that of Gasdermin bGSDM from Unknown prokaryotic organism.